Here is a 612-residue protein sequence, read N- to C-terminus: Methionine--tRNA ligase (612 aa).

The short motif at 12–22 (PYANGPRHIGH) is the 'HIGH' region element. Zn(2+) is bound by residues Cys-144, Cys-147, Cys-157, and Cys-160. The 'KMSKS' region signature appears at 350 to 354 (KFSSS). ATP is bound at residue Ser-353. Residues 580 to 612 (IQPGTQLSKPKPLFPKLDPELAETGPEWAPVQK) are disordered.

The protein belongs to the class-I aminoacyl-tRNA synthetase family. MetG type 1 subfamily. As to quaternary structure, monomer. Zn(2+) is required as a cofactor.

The protein localises to the cytoplasm. The catalysed reaction is tRNA(Met) + L-methionine + ATP = L-methionyl-tRNA(Met) + AMP + diphosphate. In terms of biological role, is required not only for elongation of protein synthesis but also for the initiation of all mRNA translation through initiator tRNA(fMet) aminoacylation. The protein is Methionine--tRNA ligase of Corynebacterium jeikeium (strain K411).